We begin with the raw amino-acid sequence, 313 residues long: Carbamate kinase 2 (313 aa).

The protein belongs to the carbamate kinase family.

Its subcellular location is the cytoplasm. The catalysed reaction is hydrogencarbonate + NH4(+) + ATP = carbamoyl phosphate + ADP + H2O + H(+). Its pathway is metabolic intermediate metabolism; carbamoyl phosphate degradation; CO(2) and NH(3) from carbamoyl phosphate: step 1/1. In Staphylococcus aureus (strain MRSA252), this protein is Carbamate kinase 2 (arcC2).